The chain runs to 1037 residues: Sentrin-specific protease 7 (1037 aa).

Over residues 1 to 10 (MDRARPGRRR) the composition is skewed to basic residues. Disordered regions lie at residues 1 to 27 (MDRARPGRRRASSEIVTEGKRKKSSPA) and 185 to 399 (SDTA…ENSS). A phosphoserine mark is found at S12, S13, and S25. Residues 192–208 (SEQLSSSSDGSLESCQS) show a composition bias toward low complexity. Polar residues predominate over residues 272 to 282 (GTSNKNTSYSY). A compositionally biased stretch (basic residues) spans 290-300 (VSRKRKKRGRS). Composition is skewed to basic and acidic residues over residues 301–321 (NFHDSHNSKTSLDKPTEHTKE) and 328–341 (VSRKLEESGEDSHQ). Over residues 379–399 (ASSPNKSLESSASSEVSENSS) the composition is skewed to low complexity. S434 and S435 each carry phosphoserine. The segment at 747–1037 (LGVTNEDLEC…HLQQQKGGSC (291 aa)) is protease. H847 is an active-site residue. The disordered stretch occupies residues 873–909 (QFQGQQSQHDHKMTDNDPHTTSTVSTSAEDSQSTEVN). Residues 880 to 890 (QHDHKMTDNDP) are compositionally biased toward basic and acidic residues. Polar residues predominate over residues 891–909 (HTTSTVSTSAEDSQSTEVN). The active site involves D926. The active-site Nucleophile is C979.

This sequence belongs to the peptidase C48 family.

It is found in the cytoplasm. In terms of biological role, protease that acts as a positive regulator of the cGAS-STING pathway by catalyzing desumoylation of CGAS. Desumoylation of CGAS promotes DNA-binding activity of CGAS, subsequent oligomerization and activation. Deconjugates SUMO2 and SUMO3 from targeted proteins, but not SUMO1. Catalyzes the deconjugation of poly-SUMO2 and poly-SUMO3 chains. Has very low efficiency in processing full-length SUMO proteins to their mature forms. The protein is Sentrin-specific protease 7 of Mus musculus (Mouse).